We begin with the raw amino-acid sequence, 156 residues long: Calmodulin (156 aa).

Serine 2 is modified (N-acetylserine). EF-hand domains follow at residues 15 to 50 (EQIAEFKEAFSLFDKDGDGTITTKELGTVMRSLGQN), 51 to 86 (PTEAELQDMINEVDADGNGTIDFPEFLTMMARKMKD), 88 to 123 (DSEEEIREAFRVFDKDGNGFISAAELRHVMTNLGEK), and 124 to 156 (LTDEEVDEMIREADIDGDGQVNYEEFVTMMTSK). 14 residues coordinate Ca(2+): aspartate 28, aspartate 30, aspartate 32, threonine 34, glutamate 39, aspartate 64, aspartate 66, asparagine 68, threonine 70, glutamate 75, aspartate 101, aspartate 103, asparagine 105, and glutamate 112. Lysine 123 carries the post-translational modification N6,N6,N6-trimethyllysine. Aspartate 137, aspartate 139, aspartate 141, glutamine 143, and glutamate 148 together coordinate Ca(2+).

It belongs to the calmodulin family.

In terms of biological role, calmodulin mediates the control of a large number of enzymes, ion channels and other proteins by Ca(2+). Among the enzymes to be stimulated by the calmodulin-Ca(2+) complex are a number of protein kinases and phosphatases. The polypeptide is Calmodulin (Strongylocentrotus intermedius (Sea urchin)).